A 2059-amino-acid chain; its full sequence is MRIIAGSTNQNDPKYGPRAGKQCMSNCFSFLHTVYLNGINNVLNKESIDIIMENGALLDNISTTTLKLETGNIPEYRFFTEIPKKISSNFGETIHELSRPFNGTLESQHIDNEVYLGLLDFLLYGKNKKPAFIVITIGVMARAIFIVDELFYLFDSHASDTENSAAIYICEDIDELYALLAIENVAEFYYDAVFSYFIETTDLSLEDGDATILILKTYKDPDIALSLNDFLTMYSSTSSTKTAETNTLISKQSPSKRKQEKTSLNSNSLEKKRKQGSSLKYYNNEVDLVPSFYELRPQFNNILFELSNFPIVKENVNWTLYIQKFATKSTQPFTKPFIWNRVFHLFSQVVDALIMIKNDHWDETQQQKQFFTHFLPFKEFSEEFENAIEACRENNLDLILLYKNYLSKTTAFKNLERILLTKFSAIVSPVHEKHYTLVNTWLTNLIQKLVKHPEDTNAFINDYVLKNPLNHFICLNKKEKQSIALLLNKKRMSMLKDVEIEKNGFVQLQAFIENIGEAPANYLDPENARKVNVEEVSEKDIPTLSTDKVSIPNESMFTSNKKHSIEKLIHAKLKAILSTMGQRLTRIIQENYNNIAAGFLPVNDLNNLFAYLVKLYFDVYSITINGFVVENELIKNIEQIYDNTQYLRFGLTRFNMQNLTPFTISVRKMFLDFFLSQKTLIDRAEEIIENLEFKSVTPEGKQKLATKNMLREQLEQLNAMDVDDTINLKTDTLTHQVLFSDQELRMIQDFILQLSIHNIPSINFVKSLKLHIILEKRPDILLALQEKVQNILYFYFQDLVNEIPAQENVLSTMLFIIELFPADSRIHLLETGYISRHIVKKWLNMKSLQDAEDLIRFININKEQLGKFEHQPFGKEIQKLIEKIHLFYKQKVIEYQEDVWSEMAKNIILTSPSELSQFLASAPTQRIIQKHKNNLDQKLLIHMENQAKQAMEDDKKRVACSKINLERHLNDLLLLLKDRQFASIQASVLIVCENIFKTIPDDNLIIQFSHALLSVLLDIEKDLKSYSSEILEKILINRPLETSRLLVFKDAYGNLKEFLNALKQSLFATADVQNKADFLIQILDFTYKFRHKTNKGKLLHSIYNEDFKLYEETLTELRKKATDAKESLTKLFKASEQKIELSRTIPLKEIYLNIETVNFQGYGNVVFRESAFKRAIEVEIKNYEMKLNDLIKHFNSHLKTKIDHIQILNLSFDNKWKDFVSKSKISFPPELTISSQELIKDPIKVITETLNKASNDLAYVISEKILKWLIVFVKELNTFFVATMSEFGEVIPFDYKHFRALEYEINSKYIEIENKIICNEIIENTDNIEKLSTLIKQIDPNRIAGGKQKFQDYLSKILTAETNQQQTRYKEQLKKQYFDLLDNIAHFRFAFDFNHQQNLILKLKDKFKTLRTDTVFERFPNLDDTFVSSMNVENFLQALEALSHFVQAAQNFLQNVLTEQADLFPQTNFIPVELSTVKTIPKSDINLRMKIHTPQTFFQVDSVFNTQLIVDEKGIPVQFYNVFHNIVFKFFALNYKKIIVPDKVLNLVSTKYKILTTLKSILSVVKSFWKEIINFDLTSYFQGKAEFTFQNVFPIINLKIFIYIITQAWSVTSDETQHSFELPLEKFSLLIIANNPEFLFGSLQCPVDLAINSLIPLLEKKKYFTAFTISDNPPKLSMDELKIVCLDLNTWSEITLEKYTFKKNSLMQLCMGKEKFFIYLLSALVLPQNFLNYIWIQYKPSCCAQDSFQQLIQDLCFEYTHQNHIKPISLNLQEPNALKHGERILSKFVLEKNANTSLFSIFLGKQFLLDYLLFSYLTATEMTFSYYVDSIKNFLLTIRHLENVQQNVDFRTILQSRNFDLKYLLTQSWTQNVLEQSIFHVQLDKIIADIKQPQLSLKKIPLVLFNGDNEVVSTYVPPEQASQTEQSFRIKNIFPNPVQEYSSKNVILFTNYPKNTKFLFNSPPPKTAAKSYKLPDTTDDINTETLSSPTIQRIPIKGLVPKENEIVFLPEKNTAHTDSKETKTHLIDTFNILSQTKGEIKTFSTDFDQTISKLKHLYF.

Positions methionine 1–phenylalanine 230 are deubiquitination activity. In terms of domain architecture, Peptidase C76 spans isoleucine 3–aspartate 220. Residues cysteine 23, aspartate 155, and histidine 157 contribute to the active site. The disordered stretch occupies residues threonine 245–lysine 272. A region of interest (interaction with inner tegument protein) is located at residue serine 278.

This sequence belongs to the herpesviridae large tegument protein family. In terms of assembly, interacts with host CUL1 and CUL4A; these interactions inhibit the E3 ligase activity of cullins. Interacts with inner tegument protein. Interacts with capsid vertex specific component CVC2. Interacts with the major capsid protein/MCP.

Its subcellular location is the virion tegument. It is found in the host cytoplasm. The protein resides in the host nucleus. The enzyme catalyses Thiol-dependent hydrolysis of ester, thioester, amide, peptide and isopeptide bonds formed by the C-terminal Gly of ubiquitin (a 76-residue protein attached to proteins as an intracellular targeting signal).. In terms of biological role, large tegument protein that plays multiple roles in the viral cycle. During viral entry, remains associated with the capsid while most of the tegument is detached and participates in the capsid transport toward the host nucleus. Plays a role in the routing of the capsid at the nuclear pore complex and subsequent uncoating. Within the host nucleus, acts as a deneddylase and promotes the degradation of nuclear CRLs (cullin-RING ubiquitin ligases) and thereby stabilizes nuclear CRL substrates, while cytoplasmic CRLs remain unaffected. These modifications prevent host cell cycle S-phase progression and create a favorable environment allowing efficient viral genome replication. Participates later in the secondary envelopment of capsids. Indeed, plays a linker role for the association of the outer viral tegument to the capsids together with the inner tegument protein. This Human herpesvirus 7 (strain JI) (HHV-7) protein is Large tegument protein deneddylase (U31).